Consider the following 474-residue polypeptide: Putative matrix metalloproteinase (474 aa).

Positions 1–17 (MIIYFAVITCSLKLCRS) are cleaved as a signal peptide. His189 contacts Zn(2+). The active site involves Glu190. Zn(2+) contacts are provided by His193 and His199. Residues 299–344 (AGVYDAISYVRGDLYVFVGDLHWRFDTSGMLHNGYPQPTGATWRLP) form a Hemopexin repeat.

Belongs to the peptidase M10A family. Zn(2+) serves as cofactor.

This chain is Putative matrix metalloproteinase, found in Heliothis virescens ascovirus 3e (HvAV-3e).